The chain runs to 247 residues: E3 ubiquitin-protein ligase RNF182 (247 aa).

The RING-type zinc-finger motif lies at 20–68 (CKICYNRYNLKQRKPKVLECCHRVCAKCLYKIIDFGDSPQGVIVCPFCR). Helical transmembrane passes span 184–204 (VLVWLLGLLYFSSLPLGIYLL) and 211–231 (LGVVFVSLVPSSLVILMVYGF).

As to quaternary structure, interacts with ATP6V0C.

The protein resides in the membrane. The protein localises to the cytoplasm. It catalyses the reaction S-ubiquitinyl-[E2 ubiquitin-conjugating enzyme]-L-cysteine + [acceptor protein]-L-lysine = [E2 ubiquitin-conjugating enzyme]-L-cysteine + N(6)-ubiquitinyl-[acceptor protein]-L-lysine.. The protein operates within protein modification; protein ubiquitination. E3 ubiquitin-protein ligase that mediates the ubiquitination of ATP6V0C and targets it to degradation via the ubiquitin-proteasome pathway. Also plays a role in the inhibition of TLR-triggered innate immune response by mediating 'Lys'-48-linked ubiquitination and subsequent degradation of NF-kappa-B component RELA. The chain is E3 ubiquitin-protein ligase RNF182 (RNF182) from Ailuropoda melanoleuca (Giant panda).